The primary structure comprises 123 residues: Glucose starvation-inducible protein B (123 aa).

2 stretches are compositionally biased toward basic and acidic residues: residues 1–29 (MADNNKMSREEAGRKGGETTSKNHDKEFY) and 41–109 (SKNH…KEFY). The interval 1–123 (MADNNKMSRE…SKGGNARNND (123 aa)) is disordered. 5 repeat units span residues 13-32 (GRKGGETTSKNHDKEFYQEI), 33-52 (GQKGGEATSKNHDKEFYQEI), 53-72 (GEKGGEATSKNHDKEFYQEI), 73-92 (GEKGGEATSENHDKEFYQEI), and 93-112 (GRKGGEATSKNHDKEFYQEI). Residues 13 to 120 (GRKGGETTSK…EIGSKGGNAR (108 aa)) are 5 X 20 AA approximate tandem repeats.

Functionally, involved in an adaptive response to nutrient deprivation other than sporulation. This is Glucose starvation-inducible protein B (gsiB) from Bacillus subtilis (strain 168).